Here is a 251-residue protein sequence, read N- to C-terminus: Triosephosphate isomerase (251 aa).

9-11 (NWK) lines the substrate pocket. The active-site Electrophile is the H95. The active-site Proton acceptor is the E167. Residues G173, S213, and 234–235 (GG) contribute to the substrate site. At S213 the chain carries Phosphoserine.

Belongs to the triosephosphate isomerase family. In terms of assembly, homodimer.

Its subcellular location is the cytoplasm. It carries out the reaction D-glyceraldehyde 3-phosphate = dihydroxyacetone phosphate. It participates in carbohydrate biosynthesis; gluconeogenesis. It functions in the pathway carbohydrate degradation; glycolysis; D-glyceraldehyde 3-phosphate from glycerone phosphate: step 1/1. Functionally, involved in the gluconeogenesis. Catalyzes stereospecifically the conversion of dihydroxyacetone phosphate (DHAP) to D-glyceraldehyde-3-phosphate (G3P). The chain is Triosephosphate isomerase from Shouchella clausii (strain KSM-K16) (Alkalihalobacillus clausii).